The sequence spans 310 residues: N-acetyl-gamma-glutamyl-phosphate reductase (310 aa).

C117 is an active-site residue.

This sequence belongs to the NAGSA dehydrogenase family. Type 2 subfamily.

The protein localises to the cytoplasm. It carries out the reaction N-acetyl-L-glutamate 5-semialdehyde + phosphate + NADP(+) = N-acetyl-L-glutamyl 5-phosphate + NADPH + H(+). It functions in the pathway amino-acid biosynthesis; L-arginine biosynthesis; N(2)-acetyl-L-ornithine from L-glutamate: step 3/4. Its function is as follows. Catalyzes the NADPH-dependent reduction of N-acetyl-5-glutamyl phosphate to yield N-acetyl-L-glutamate 5-semialdehyde. This is N-acetyl-gamma-glutamyl-phosphate reductase from Rhizobium johnstonii (strain DSM 114642 / LMG 32736 / 3841) (Rhizobium leguminosarum bv. viciae).